The following is a 254-amino-acid chain: uncharacterized protein (254 aa).

A coiled-coil region spans residues 66-111 (DMVSEMNKRMDDLAARIVVLEDEKAELRRINQRLTEKVRDKDMEKA).

This is an uncharacterized protein from Ostreid herpesvirus 1 (isolate France) (OsHV-1).